Reading from the N-terminus, the 483-residue chain is Regulatory protein ViaA (483 aa).

Belongs to the ViaA family. As to quaternary structure, homodimer. Interacts with RavA.

The protein localises to the cytoplasm. Component of the RavA-ViaA chaperone complex, which may act on the membrane to optimize the function of some of the respiratory chains. ViaA stimulates the ATPase activity of RavA. In Escherichia coli (strain SMS-3-5 / SECEC), this protein is Regulatory protein ViaA.